Consider the following 65-residue polypeptide: Large ribosomal subunit protein bL33c (65 aa).

Belongs to the bacterial ribosomal protein bL33 family.

It localises to the plastid. Its subcellular location is the chloroplast. The polypeptide is Large ribosomal subunit protein bL33c (Chaetosphaeridium globosum (Charophycean green alga)).